The chain runs to 533 residues: Glucose-6-phosphate isomerase (533 aa).

The active-site Proton donor is the E322. Active-site residues include H351 and K455.

This sequence belongs to the GPI family.

It is found in the cytoplasm. The catalysed reaction is alpha-D-glucose 6-phosphate = beta-D-fructose 6-phosphate. It participates in carbohydrate biosynthesis; gluconeogenesis. It functions in the pathway carbohydrate degradation; glycolysis; D-glyceraldehyde 3-phosphate and glycerone phosphate from D-glucose: step 2/4. Functionally, catalyzes the reversible isomerization of glucose-6-phosphate to fructose-6-phosphate. The polypeptide is Glucose-6-phosphate isomerase (Desulfitobacterium hafniense (strain Y51)).